The sequence spans 166 residues: KH homology domain-containing protein 1A (166 aa).

The KH; atypical domain occupies 19–78 (PLVFDMEEDKEDYIFGPHDEYLHTLEVHSNTLIQLERWFTPTGQTRVTVVGPLKARLWVM).

It belongs to the KHDC1 family.

The protein localises to the cytoplasm. In terms of biological role, has pro-apoptotic activity. The polypeptide is KH homology domain-containing protein 1A (Khdc1a) (Mus musculus (Mouse)).